Reading from the N-terminus, the 592-residue chain is Aspartate--tRNA ligase (592 aa).

Glutamate 176 is an L-aspartate binding site. The aspartate stretch occupies residues 200–203 (QIFK). Residue arginine 222 coordinates L-aspartate. ATP contacts are provided by residues 222-224 (RDE) and glutamine 231. Histidine 450 is an L-aspartate binding site. Glutamate 484 is an ATP binding site. Arginine 491 lines the L-aspartate pocket. 536–539 (GLDR) serves as a coordination point for ATP.

Belongs to the class-II aminoacyl-tRNA synthetase family. Type 1 subfamily. In terms of assembly, homodimer.

It localises to the cytoplasm. The enzyme catalyses tRNA(Asp) + L-aspartate + ATP = L-aspartyl-tRNA(Asp) + AMP + diphosphate. Catalyzes the attachment of L-aspartate to tRNA(Asp) in a two-step reaction: L-aspartate is first activated by ATP to form Asp-AMP and then transferred to the acceptor end of tRNA(Asp). This Macrococcus caseolyticus (strain JCSC5402) (Macrococcoides caseolyticum) protein is Aspartate--tRNA ligase.